The sequence spans 90 residues: MLCVIYRSSKRDQTYLYVEKKDDFSRVPEDLLKSFGTPQLAMVLSLEGREKLASADIEKVKEALKEEGFYLQVPPPLENLLKQHLSDDKK.

The 85-residue stretch at 1–85 (MLCVIYRSSK…PLENLLKQHL (85 aa)) folds into the YcgL domain.

The protein is YcgL domain-containing protein Spro_2755 of Serratia proteamaculans (strain 568).